Here is a 449-residue protein sequence, read N- to C-terminus: Trigger factor (449 aa).

The 86-residue stretch at glycine 172 to glutamine 257 folds into the PPIase FKBP-type domain.

It belongs to the FKBP-type PPIase family. Tig subfamily.

The protein resides in the cytoplasm. It catalyses the reaction [protein]-peptidylproline (omega=180) = [protein]-peptidylproline (omega=0). Its function is as follows. Involved in protein export. Acts as a chaperone by maintaining the newly synthesized protein in an open conformation. Functions as a peptidyl-prolyl cis-trans isomerase. The chain is Trigger factor from Ureaplasma parvum serovar 3 (strain ATCC 27815 / 27 / NCTC 11736).